The sequence spans 658 residues: Glycine--tRNA ligase beta subunit (658 aa).

This sequence belongs to the class-II aminoacyl-tRNA synthetase family. Tetramer of two alpha and two beta subunits.

It is found in the cytoplasm. The enzyme catalyses tRNA(Gly) + glycine + ATP = glycyl-tRNA(Gly) + AMP + diphosphate. The sequence is that of Glycine--tRNA ligase beta subunit from Rickettsia bellii (strain OSU 85-389).